Reading from the N-terminus, the 38-residue chain is Bacteriocin BAC79 (38 aa).

The antimicrobial activity of BAC79 was completely lost after treatment with enzymes trypsin, pepsin, proteinase-K, and carboxypeptidase, while there was no loss of activity with either amylase or lipase. Functionally, has antibacterial activity against a wide spectrum of Gram-positive and Gram-negative bacteria, including L.monocytogenes which is inhibited through disruption of the cell membrane. The polypeptide is Bacteriocin BAC79 (Weissella confusa (Lactobacillus confusus)).